We begin with the raw amino-acid sequence, 154 residues long: 6,7-dimethyl-8-ribityllumazine synthase (154 aa).

5-amino-6-(D-ribitylamino)uracil contacts are provided by residues Phe-22, 56-58 (SFE), and 80-82 (AVI). A (2S)-2-hydroxy-3-oxobutyl phosphate-binding site is contributed by 85–86 (ST). His-88 serves as the catalytic Proton donor. Tyr-113 contributes to the 5-amino-6-(D-ribitylamino)uracil binding site. Arg-127 lines the (2S)-2-hydroxy-3-oxobutyl phosphate pocket.

Belongs to the DMRL synthase family. As to quaternary structure, forms an icosahedral capsid composed of 60 subunits, arranged as a dodecamer of pentamers.

It carries out the reaction (2S)-2-hydroxy-3-oxobutyl phosphate + 5-amino-6-(D-ribitylamino)uracil = 6,7-dimethyl-8-(1-D-ribityl)lumazine + phosphate + 2 H2O + H(+). It participates in cofactor biosynthesis; riboflavin biosynthesis; riboflavin from 2-hydroxy-3-oxobutyl phosphate and 5-amino-6-(D-ribitylamino)uracil: step 1/2. Catalyzes the formation of 6,7-dimethyl-8-ribityllumazine by condensation of 5-amino-6-(D-ribitylamino)uracil with 3,4-dihydroxy-2-butanone 4-phosphate. This is the penultimate step in the biosynthesis of riboflavin. This is 6,7-dimethyl-8-ribityllumazine synthase from Sulfurihydrogenibium sp. (strain YO3AOP1).